The sequence spans 347 residues: Calcium homeostasis modulator protein 3 (347 aa).

The Cytoplasmic segment spans residues Met1–Asn20. Residues Gln9–Ser36 form a central pore region. A helical membrane pass occupies residues Gly21–Ser36. Residues Leu37–Asn48 lie on the Extracellular side of the membrane. Intrachain disulfides connect Cys41/Cys126 and Cys43/Cys157. The chain crosses the membrane as a helical span at residues Ala49–Asn71. The Cytoplasmic portion of the chain corresponds to Arg72–Met98. Residue Cys99 is the site of S-palmitoyl cysteine attachment. A helical transmembrane segment spans residues Cys99–Phe124. Residues Val125–Leu176 are Extracellular-facing. An N-linked (GlcNAc...) asparagine glycan is attached at Asn142. The chain crosses the membrane as a helical span at residues Arg177–Arg202. S-palmitoyl cysteine attachment occurs at residues Cys200 and Cys204. Topologically, residues Pro203–Val347 are cytoplasmic. Residues Gly265–Ala290 form a disordered region. Residues Pro277–Gly286 show a composition bias toward basic and acidic residues.

It belongs to the CALHM family. Associates with CALHM1 as a pore-forming subunit in a hetero-hexameric channel complex. In terms of processing, N-glycosylated. Post-translationally, palmitoylated by ZDHHC3 and ZDHHC15. Palmitoylation positively regulates CALHM1:CALHM3 channel conductance. In terms of tissue distribution, expressed in taste bud cells.

The protein localises to the basolateral cell membrane. It carries out the reaction ATP(in) = ATP(out). It catalyses the reaction Ca(2+)(in) = Ca(2+)(out). The enzyme catalyses Na(+)(in) = Na(+)(out). The catalysed reaction is K(+)(in) = K(+)(out). It carries out the reaction chloride(in) = chloride(out). Pore-forming subunit of gustatory voltage-gated ion channels required for sensory perception of sweet, bitter and umami tastes. With CALHM1 forms a fast-activating voltage-gated ATP-release channel in type II taste bud cells, ATP acting as a neurotransmitter to activate afferent neural gustatory pathways. Acts both as a voltage-gated and calcium-activated ion channel: mediates neuronal excitability in response to membrane depolarization and low extracellular Ca(2+) concentration. Has poor ion selectivity and forms a wide pore (around 14 Angstroms) that mediates permeation of small ions including Ca(2+), Na(+), K(+) and Cl(-), as well as larger ions such as ATP(4-). The chain is Calcium homeostasis modulator protein 3 from Mus musculus (Mouse).